Here is a 163-residue protein sequence, read N- to C-terminus: MAENTNDSQVVETEEELTNYTTETNAGAGTGTSAIEPGYGTGRRKEAVARVRLVPGDGKWTINGRTLEEYFPSKLLQREVNSPIVLLKLEGKFDAIVLVDGGGTTGQAGAIRLGVARALNAIDRDANRAALKKAGFLTRDARVVERKKAGLHKARRAPQFSKR.

A compositionally biased stretch (polar residues) spans 1-11 (MAENTNDSQVV). Positions 1–40 (MAENTNDSQVVETEEELTNYTTETNAGAGTGTSAIEPGYG) are disordered. Residues 18-27 (TNYTTETNAG) show a composition bias toward low complexity.

This sequence belongs to the universal ribosomal protein uS9 family.

The protein is Small ribosomal subunit protein uS9 of Bifidobacterium longum (strain DJO10A).